The following is a 121-amino-acid chain: UPF0102 protein BT_2236 (121 aa).

It belongs to the UPF0102 family.

The sequence is that of UPF0102 protein BT_2236 from Bacteroides thetaiotaomicron (strain ATCC 29148 / DSM 2079 / JCM 5827 / CCUG 10774 / NCTC 10582 / VPI-5482 / E50).